The primary structure comprises 509 residues: ATP synthase subunit alpha (509 aa).

Residue 169–176 (GDRQTGKT) participates in ATP binding.

Belongs to the ATPase alpha/beta chains family. F-type ATPases have 2 components, CF(1) - the catalytic core - and CF(0) - the membrane proton channel. CF(1) has five subunits: alpha(3), beta(3), gamma(1), delta(1), epsilon(1). CF(0) has three main subunits: a(1), b(2) and c(9-12). The alpha and beta chains form an alternating ring which encloses part of the gamma chain. CF(1) is attached to CF(0) by a central stalk formed by the gamma and epsilon chains, while a peripheral stalk is formed by the delta and b chains.

Its subcellular location is the cell inner membrane. The catalysed reaction is ATP + H2O + 4 H(+)(in) = ADP + phosphate + 5 H(+)(out). Its function is as follows. Produces ATP from ADP in the presence of a proton gradient across the membrane. The alpha chain is a regulatory subunit. This chain is ATP synthase subunit alpha, found in Methylocella silvestris (strain DSM 15510 / CIP 108128 / LMG 27833 / NCIMB 13906 / BL2).